The chain runs to 323 residues: Small ribosomal subunit protein mS35 (323 aa).

Residues 31-59 (PVPTPSLPERTPGNERPPRRKALPPRTEK) form a disordered region. A coiled-coil region spans residues 257–321 (SSERNILETL…YKESVKRLLN (65 aa)).

It belongs to the mitochondrion-specific ribosomal protein mS35 family. Component of the mitochondrial small ribosomal subunit (mt-SSU). Mature mammalian 55S mitochondrial ribosomes consist of a small (28S) and a large (39S) subunit. The 28S small subunit contains a 12S ribosomal RNA (12S mt-rRNA) and 30 different proteins. The 39S large subunit contains a 16S rRNA (16S mt-rRNA), a copy of mitochondrial valine transfer RNA (mt-tRNA(Val)), which plays an integral structural role, and 52 different proteins.

The protein localises to the mitochondrion. The chain is Small ribosomal subunit protein mS35 from Homo sapiens (Human).